Here is a 207-residue protein sequence, read N- to C-terminus: Small ribosomal subunit protein uS5 (207 aa).

The disordered stretch occupies residues 1-51 (MTDTPTKQEITSKNDKVPGAIPGEQKKNNRNNDRKRNRRGDSKNLERDSDW). Residues 24–51 (EQKKNNRNNDRKRNRRGDSKNLERDSDW) show a composition bias toward basic and acidic residues. The 64-residue stretch at 51-114 (WQERVVQIRR…SDGKKNLVRV (64 aa)) folds into the S5 DRBM domain.

It belongs to the universal ribosomal protein uS5 family. In terms of assembly, part of the 30S ribosomal subunit. Contacts proteins S4 and S8.

Its function is as follows. With S4 and S12 plays an important role in translational accuracy. Located at the back of the 30S subunit body where it stabilizes the conformation of the head with respect to the body. The protein is Small ribosomal subunit protein uS5 of Prochlorococcus marinus (strain MIT 9312).